A 299-amino-acid chain; its full sequence is Ribosomal RNA small subunit methyltransferase H (299 aa).

S-adenosyl-L-methionine contacts are provided by residues 36–38 (GGH), Asp-55, Phe-82, Asp-97, and Gln-104.

It belongs to the methyltransferase superfamily. RsmH family.

The protein resides in the cytoplasm. The catalysed reaction is cytidine(1402) in 16S rRNA + S-adenosyl-L-methionine = N(4)-methylcytidine(1402) in 16S rRNA + S-adenosyl-L-homocysteine + H(+). Its function is as follows. Specifically methylates the N4 position of cytidine in position 1402 (C1402) of 16S rRNA. This is Ribosomal RNA small subunit methyltransferase H from Synechococcus sp. (strain RCC307).